Here is a 353-residue protein sequence, read N- to C-terminus: UPF0283 membrane protein YcjF (353 aa).

Helical transmembrane passes span 70–90 (MVMGGLALFGASVVGQGVQWT), 100–120 (VALGGCAAGALIIGAGVGSVV), and 213–233 (ESTLMIAVSPLALVDMAFIAW).

This sequence belongs to the UPF0283 family.

The protein resides in the cell inner membrane. This is UPF0283 membrane protein YcjF from Escherichia coli O139:H28 (strain E24377A / ETEC).